Reading from the N-terminus, the 471-residue chain is V-type ATP synthase beta chain (471 aa).

It belongs to the ATPase alpha/beta chains family.

Produces ATP from ADP in the presence of a proton gradient across the membrane. The V-type beta chain is a regulatory subunit. The protein is V-type ATP synthase beta chain of Streptococcus pyogenes serotype M49 (strain NZ131).